Consider the following 221-residue polypeptide: MNNSQQWQAANTARAALYRWFAELFARELTKTNLTQLQAQYPSLHAAFSDLNLEPQSAALQTALENLQVIPAPDRALELAADFAHLFLLSGHQSAPPYASYYLESDQMLYGKPAQQMSEFLASHKLDLHPEFREPKDHLSIYLQVMSLWIKSSVDEQANLIEMAVQQQHFLEDALLSWLPKFAARCQHIRVKTQVYPAIIDLLLHFVQEDRQALEDMAEAE.

Belongs to the TorD/DmsD family. TorD subfamily.

The protein localises to the cytoplasm. Its function is as follows. Involved in the biogenesis of TorA. Acts on TorA before the insertion of the molybdenum cofactor and, as a result, probably favors a conformation of the apoenzyme that is competent for acquiring the cofactor. The sequence is that of Chaperone protein TorD from Psychrobacter sp. (strain PRwf-1).